The primary structure comprises 143 residues: MSTESAKPALSQEAIVAQFQQLRNEQRNLVNSLNTLEMDLREHKTVIETLEAADPERKCFRQIGGVLCERTVKEVLPQLVENKDFIAKTIQMVTNDLSKKGSELNKFKEEHNIKIRGEHLVAEGAKGDDAEDKAENRNVLVFN.

It belongs to the prefoldin subunit beta family. As to quaternary structure, heterohexamer of two PFD-alpha type and four PFD-beta type subunits.

Binds specifically to cytosolic chaperonin (c-CPN) and transfers target proteins to it. Binds to nascent polypeptide chain and promotes folding in an environment in which there are many competing pathways for nonnative proteins. The protein is Probable prefoldin subunit 2 of Drosophila melanogaster (Fruit fly).